Reading from the N-terminus, the 595-residue chain is Methionine--tRNA ligase (595 aa).

The 'HIGH' region signature appears at 11–21 (PYANGPRHIGH). Zn(2+)-binding residues include Cys-143, Cys-146, Cys-156, and Cys-159. Residues 350–354 (KFSSS) carry the 'KMSKS' region motif. Residue Ser-353 coordinates ATP.

The protein belongs to the class-I aminoacyl-tRNA synthetase family. MetG type 1 subfamily. In terms of assembly, monomer. Zn(2+) serves as cofactor.

It localises to the cytoplasm. It carries out the reaction tRNA(Met) + L-methionine + ATP = L-methionyl-tRNA(Met) + AMP + diphosphate. Is required not only for elongation of protein synthesis but also for the initiation of all mRNA translation through initiator tRNA(fMet) aminoacylation. The sequence is that of Methionine--tRNA ligase from Nocardioides sp. (strain ATCC BAA-499 / JS614).